The following is a 694-amino-acid chain: Methionine--tRNA ligase (694 aa).

The 'HIGH' region motif lies at 12 to 22; the sequence is PYANGPLHLGH. 4 residues coordinate Zn(2+): Cys-143, Cys-146, Cys-156, and Cys-159. Positions 330–334 match the 'KMSKS' region motif; that stretch reads KMSKS. Lys-333 contacts ATP. Residues 550–573 are compositionally biased toward low complexity; that stretch reads MAAPAAPATTTKPAPSKADAKPAA. The interval 550–582 is disordered; the sequence is MAAPAAPATTTKPAPSKADAKPAAVANPESQTT. In terms of domain architecture, tRNA-binding spans 591 to 694; it reads DFAKLDLRIG…SGAQPGMPVR (104 aa).

This sequence belongs to the class-I aminoacyl-tRNA synthetase family. MetG type 1 subfamily. Homodimer. The cofactor is Zn(2+).

The protein localises to the cytoplasm. It carries out the reaction tRNA(Met) + L-methionine + ATP = L-methionyl-tRNA(Met) + AMP + diphosphate. Its function is as follows. Is required not only for elongation of protein synthesis but also for the initiation of all mRNA translation through initiator tRNA(fMet) aminoacylation. The chain is Methionine--tRNA ligase from Xanthomonas euvesicatoria pv. vesicatoria (strain 85-10) (Xanthomonas campestris pv. vesicatoria).